Reading from the N-terminus, the 70-residue chain is Putative ankyrin repeat protein RC0502 (70 aa).

The stretch at 9–43 is one ANK repeat; that stretch reads KGRIPIHYATYSKQHEITQILILLQPGSEIDTVDN.

This chain is Putative ankyrin repeat protein RC0502, found in Rickettsia conorii (strain ATCC VR-613 / Malish 7).